Here is an 89-residue protein sequence, read N- to C-terminus: Small ribosomal subunit protein uS15 (89 aa).

Belongs to the universal ribosomal protein uS15 family. As to quaternary structure, part of the 30S ribosomal subunit. Forms a bridge to the 50S subunit in the 70S ribosome, contacting the 23S rRNA.

One of the primary rRNA binding proteins, it binds directly to 16S rRNA where it helps nucleate assembly of the platform of the 30S subunit by binding and bridging several RNA helices of the 16S rRNA. Its function is as follows. Forms an intersubunit bridge (bridge B4) with the 23S rRNA of the 50S subunit in the ribosome. This chain is Small ribosomal subunit protein uS15, found in Baumannia cicadellinicola subsp. Homalodisca coagulata.